The chain runs to 257 residues: Ditrans,polycis-undecaprenyl-diphosphate synthase ((2E,6E)-farnesyl-diphosphate specific) (257 aa).

Residue D24 is part of the active site. Residue D24 coordinates Mg(2+). Residues 25 to 28, W29, R37, H41, and 69 to 71 each bind substrate; these read GNGR and SSE. N72 acts as the Proton acceptor in catalysis. Residues W73, R75, R192, and 198-200 contribute to the substrate site; that span reads RIS. E211 is a Mg(2+) binding site.

This sequence belongs to the UPP synthase family. As to quaternary structure, homodimer. The cofactor is Mg(2+).

It carries out the reaction 8 isopentenyl diphosphate + (2E,6E)-farnesyl diphosphate = di-trans,octa-cis-undecaprenyl diphosphate + 8 diphosphate. Catalyzes the sequential condensation of isopentenyl diphosphate (IPP) with (2E,6E)-farnesyl diphosphate (E,E-FPP) to yield (2Z,6Z,10Z,14Z,18Z,22Z,26Z,30Z,34E,38E)-undecaprenyl diphosphate (di-trans,octa-cis-UPP). UPP is the precursor of glycosyl carrier lipid in the biosynthesis of bacterial cell wall polysaccharide components such as peptidoglycan and lipopolysaccharide. The chain is Ditrans,polycis-undecaprenyl-diphosphate synthase ((2E,6E)-farnesyl-diphosphate specific) from Aliivibrio fischeri (strain ATCC 700601 / ES114) (Vibrio fischeri).